The sequence spans 124 residues: Fluoride-specific ion channel FluC (124 aa).

4 consecutive transmembrane segments (helical) span residues 4–24, 35–55, 70–90, and 95–115; these read ILFV…ISIF, FGTL…YALG, VGLL…LLLI, and WLKA…MVYL. Residues Gly-74 and Thr-77 each contribute to the Na(+) site.

This sequence belongs to the fluoride channel Fluc/FEX (TC 1.A.43) family.

The protein localises to the cell inner membrane. The enzyme catalyses fluoride(in) = fluoride(out). With respect to regulation, na(+) is not transported, but it plays an essential structural role and its presence is essential for fluoride channel function. Fluoride-specific ion channel. Important for reducing fluoride concentration in the cell, thus reducing its toxicity. The polypeptide is Fluoride-specific ion channel FluC (Shewanella woodyi (strain ATCC 51908 / MS32)).